Consider the following 483-residue polypeptide: tRNA-2-methylthio-N(6)-dimethylallyladenosine synthase (483 aa).

One can recognise an MTTase N-terminal domain in the interval 31 to 148 (KKLYIETQGC…LPQMLDQHHA (118 aa)). Positions 40, 77, 111, 192, 196, and 199 each coordinate [4Fe-4S] cluster. In terms of domain architecture, Radical SAM core spans 178-410 (RVEGFKAFVS…QQVIKQSSIE (233 aa)). The 65-residue stretch at 413–477 (DAMLGKIERV…LNLVYGELLN (65 aa)) folds into the TRAM domain.

The protein belongs to the methylthiotransferase family. MiaB subfamily. Monomer. Requires [4Fe-4S] cluster as cofactor.

The protein localises to the cytoplasm. The catalysed reaction is N(6)-dimethylallyladenosine(37) in tRNA + (sulfur carrier)-SH + AH2 + 2 S-adenosyl-L-methionine = 2-methylsulfanyl-N(6)-dimethylallyladenosine(37) in tRNA + (sulfur carrier)-H + 5'-deoxyadenosine + L-methionine + A + S-adenosyl-L-homocysteine + 2 H(+). Its function is as follows. Catalyzes the methylthiolation of N6-(dimethylallyl)adenosine (i(6)A), leading to the formation of 2-methylthio-N6-(dimethylallyl)adenosine (ms(2)i(6)A) at position 37 in tRNAs that read codons beginning with uridine. The sequence is that of tRNA-2-methylthio-N(6)-dimethylallyladenosine synthase from Acinetobacter baumannii (strain ACICU).